Consider the following 434-residue polypeptide: Nicotinate phosphoribosyltransferase (434 aa).

Phosphohistidine; by autocatalysis is present on H242.

This sequence belongs to the NAPRTase family. Transiently phosphorylated on a His residue during the reaction cycle. Phosphorylation strongly increases the affinity for substrates and increases the rate of nicotinate D-ribonucleotide production. Dephosphorylation regenerates the low-affinity form of the enzyme, leading to product release.

The catalysed reaction is nicotinate + 5-phospho-alpha-D-ribose 1-diphosphate + ATP + H2O = nicotinate beta-D-ribonucleotide + ADP + phosphate + diphosphate. Its pathway is cofactor biosynthesis; NAD(+) biosynthesis; nicotinate D-ribonucleotide from nicotinate: step 1/1. Functionally, catalyzes the synthesis of beta-nicotinate D-ribonucleotide from nicotinate and 5-phospho-D-ribose 1-phosphate at the expense of ATP. This chain is Nicotinate phosphoribosyltransferase, found in Bartonella tribocorum (strain CIP 105476 / IBS 506).